The chain runs to 311 residues: Acyl-CoA dehydrogenase IpdE2 (311 aa).

Arginine 206 and glycine 273 together coordinate FAD.

Belongs to the acyl-CoA dehydrogenase family. As to quaternary structure, heterotetramer composed of 2 IpdE1 subunits and 2 IpdE2 subunits. It depends on FAD as a cofactor.

The enzyme catalyses 3-[(3aS,4S,5R,7aS)-5-hydroxy-7a-methyl-1-oxo-octahydro-1H-inden-4-yl]propanoyl-CoA + A = (2E)-3-[(3aS,4S,5R,7aS)-5-hydroxy-7a-methyl-1-oxo-octahydro-1H-inden-4-yl]prop-2-enoyl-CoA + AH2. Its pathway is steroid metabolism; cholesterol degradation. Functionally, involved in cholesterol degradation. Catalyzes the dehydrogenation of 5OH-HIP-CoA to 5OH-HIPE-CoA. This chain is Acyl-CoA dehydrogenase IpdE2, found in Mycolicibacterium smegmatis (strain ATCC 700084 / mc(2)155) (Mycobacterium smegmatis).